Reading from the N-terminus, the 247-residue chain is PsbP domain-containing protein 3, chloroplastic (247 aa).

Residues 1-26 constitute a chloroplast transit peptide; the sequence is MAAISPWLSSPQSFSNPRVTITDSRR. The transit peptide at 27–80 directs the protein to the thylakoid; it reads CSSISAAISVLDSSNEEQHRISSRDHVGMKRRDVMLQIASSVFFLPLAISPAFA.

This sequence belongs to the PsbP family.

It localises to the plastid. It is found in the chloroplast thylakoid lumen. This chain is PsbP domain-containing protein 3, chloroplastic (PPD3), found in Arabidopsis thaliana (Mouse-ear cress).